The primary structure comprises 108 residues: uncharacterized protein (108 aa).

Residues 81 to 108 form a disordered region; that stretch reads TNHHQQQQNHQNQQQQQQQPNGIFENNI. Low complexity predominate over residues 83-99; that stretch reads HHQQQQNHQNQQQQQQQ.

This is an uncharacterized protein from Dictyostelium discoideum (Social amoeba).